The sequence spans 448 residues: MLSLKTLLCTLLTVSSVLATPVPARDPSSIQFVHEENKKRYYDYDHGSLGEPIRGVNIGGWLLLEPYITPSLFEAFRTNDDNDEGIPVDEYHFCQYLGKDLAKSRLQSHWSTFYQEQDFANIASQGFNLVRIPIGYWAFQTLDDDPYVSGLQESYLDQAIGWARNNSLKVWVDLHGAAGSQNGFDNSGLRDSYKFLEDSNLAVTTNVLNYILKKYSAEEYLDTVIGIELINEPLGPVLDMDKMKNDYLAPAYEYLRNNIKSDQVIIIHDAFQPYNYWDDFMTENDGYWGVTIDHHHYQVFASDQLERSIDEHIKVACEWGTGVLNESHWTVCGEFAAALTDCTKWLNSVGFGARYDGSWVNGDQTSSYIGSCANNDDIAYWSDERKENTRRYVEAQLDAFEMRGGWIIWCYKTESSLEWDAQRLMFNGLFPQPLTDRKYPNQCGTISN.

The N-terminal stretch at 1–19 (MLSLKTLLCTLLTVSSVLA) is a signal peptide. Positions 20-40 (TPVPARDPSSIQFVHEENKKR) are excised as a propeptide. An N-linked (GlcNAc...) asparagine glycan is attached at Asn-165. The active-site Proton donor is the Glu-232. The N-linked (GlcNAc...) asparagine glycan is linked to Asn-325. Glu-334 functions as the Nucleophile in the catalytic mechanism.

This sequence belongs to the glycosyl hydrolase 5 (cellulase A) family.

It localises to the secreted. The protein localises to the cell wall. It carries out the reaction Successive hydrolysis of beta-D-glucose units from the non-reducing ends of (1-&gt;3)-beta-D-glucans, releasing alpha-glucose.. Its function is as follows. Glucanases possibly play a role in cell expansion during growth, in cell-cell fusion during mating, and in spore release during sporulation. This enzyme hydrolyzes both 1,3-beta- and 1,6-beta-linkages and even has beta-glucosidase activity. It could also function biosynthetically as a transglycosylase. This chain is Glucan 1,3-beta-glucosidase I/II (EXG1), found in Saccharomyces cerevisiae (strain ATCC 204508 / S288c) (Baker's yeast).